Reading from the N-terminus, the 427-residue chain is Inward rectifier potassium channel 2 (427 aa).

Topologically, residues 1-81 are cytoplasmic; the sequence is MGSVRTNRYS…IFTTCVDIRW (81 aa). Position 76 is an S-nitrosocysteine (Cys76). A helical membrane pass occupies residues 82-106; it reads RWMLVIFCLAFVLSWLFFGCVFWLI. The Extracellular segment spans residues 107-128; the sequence is ALLHGDLDASRESKACVSEVNS. An intramembrane region (helical; Pore-forming) is located at residues 129 to 140; the sequence is FTAAFLFSIETQ. An intramembrane region (pore-forming) is located at residues 141-147; it reads TTIGYGF. Residues 142–147 carry the Selectivity filter motif; it reads TIGYGF. The Extracellular segment spans residues 148–156; that stretch reads RCVTDECPV. Residues 157–178 traverse the membrane as a helical segment; that stretch reads AVFMVVFQSIVGCIIDAFIIGA. The Cytoplasmic segment spans residues 179–427; sequence VMAKMAKPKK…PRPLRRESEI (249 aa). A polyphosphoinositide (PIP2)-binding region spans residues 181 to 208; the sequence is AKMAKPKKRNETLVFSHNAVIAMRDGKL. Residues 384-427 are disordered; the sequence is SKEEDDSENGVPESTSTDTPPDIDLHNQASVPLEPRPLRRESEI. Positions 425–427 match the PDZ-binding motif; it reads SEI.

Belongs to the inward rectifier-type potassium channel (TC 1.A.2.1) family. KCNJ2 subfamily. In terms of assembly, homotetramer. Homomultimeric and heteromultimeric association with KCNJ4/Kir2.3. Can form heteromeric channels with Kir2.6/KCNJ18. Associates, via its PDZ-recognition domain, with a complex containing LIN7A, LIN7B, LIN7C, DLG1, CASK and APBA1. In terms of processing, S-nitrosylation increases the open probability and inward rectifying currents. Highly expressed in the ventricle and skeletal muscle, moderately in cerebrum and cerebellum. Only low levels are detected in kidney or lung.

It is found in the cell membrane. It localises to the sarcolemma. The protein resides in the T-tubule. It catalyses the reaction K(+)(in) = K(+)(out). With respect to regulation, activated by phosphatidylinositol 4,5 biphosphate (PtdIns(4,5)P2). In terms of biological role, inward rectifier potassium channels are characterized by a greater tendency to allow potassium to flow into the cell rather than out of it. Their voltage dependence is regulated by the concentration of extracellular potassium; as external potassium is raised, the voltage range of the channel opening shifts to more positive voltages. The inward rectification is mainly due to the blockage of outward current by internal magnesium. Can be blocked by extracellular barium and cesium. Probably participates in establishing action potential waveform and excitability of neuronal and muscle tissues. This Oryctolagus cuniculus (Rabbit) protein is Inward rectifier potassium channel 2 (KCNJ2).